An 81-amino-acid chain; its full sequence is U12-hexatoxin-Mg1a (81 aa).

The first 24 residues, 1-24, serve as a signal peptide directing secretion; the sequence is MKAPATIVILIMSLISVLWATADT. The propeptide occupies 25–50; it reads EDGNLLFPIEDFIRKFDEYPVQPKER. 3 cysteine pairs are disulfide-bonded: Cys52–Cys66, Cys59–Cys71, and Cys65–Cys75. A Proline amide modification is found at Pro78.

In terms of tissue distribution, expressed by the venom gland.

It is found in the secreted. Blocks voltage-gated sodium channels (Nav). Intracranial injection into mice causes lacrimation, slow breathing and death. Intrathorax injection into crickets causes death. The polypeptide is U12-hexatoxin-Mg1a (Macrothele gigas (Japanese funnel web spider)).